The following is a 642-amino-acid chain: Threonine--tRNA ligase (642 aa).

One can recognise a TGS domain in the interval 1–61 (MPVITLPDGS…ETDAELSIIT (61 aa)). The interval 243 to 534 (DHRKIGKQLD…LIEEYAGRFP (292 aa)) is catalytic. Residues Cys334, His385, and His511 each contribute to the Zn(2+) site.

Belongs to the class-II aminoacyl-tRNA synthetase family. In terms of assembly, homodimer. Zn(2+) is required as a cofactor.

It localises to the cytoplasm. The enzyme catalyses tRNA(Thr) + L-threonine + ATP = L-threonyl-tRNA(Thr) + AMP + diphosphate + H(+). Its function is as follows. Catalyzes the attachment of threonine to tRNA(Thr) in a two-step reaction: L-threonine is first activated by ATP to form Thr-AMP and then transferred to the acceptor end of tRNA(Thr). Also edits incorrectly charged L-seryl-tRNA(Thr). The sequence is that of Threonine--tRNA ligase from Shewanella baltica (strain OS155 / ATCC BAA-1091).